Here is a 162-residue protein sequence, read N- to C-terminus: Cytochrome c-type biogenesis protein CcmE (162 aa).

The Cytoplasmic segment spans residues 1–8 (MNPRRKKR). The chain crosses the membrane as a helical; Signal-anchor for type II membrane protein span at residues 9 to 29 (LTLAVALIGGVAAITSLLLYA). Topologically, residues 30-162 (LNSNLNLFYT…YSQQKAPDTK (133 aa)) are periplasmic. Heme is bound by residues histidine 131 and tyrosine 135. Residues 142–162 (EAMGQKHEKLDYSQQKAPDTK) are disordered. Residues 153 to 162 (YSQQKAPDTK) show a composition bias toward polar residues.

Belongs to the CcmE/CycJ family.

The protein localises to the cell inner membrane. In terms of biological role, heme chaperone required for the biogenesis of c-type cytochromes. Transiently binds heme delivered by CcmC and transfers the heme to apo-cytochromes in a process facilitated by CcmF and CcmH. The protein is Cytochrome c-type biogenesis protein CcmE of Shewanella baltica (strain OS223).